Here is a 748-residue protein sequence, read N- to C-terminus: Histone-lysine N-methyltransferase EZH2 (748 aa).

A compositionally biased stretch (acidic residues) spans 184–199 (YEDDEDGDDNQDDEQD). 2 disordered regions span residues 184-220 (YEDD…LRKF) and 342-428 (AERI…NIEP). Over residues 200 to 220 (DTAKDQDDNMEDKETQPLRKF) the composition is skewed to basic and acidic residues. Residues 347 to 359 (TPPKRPSGRRRGR) are compositionally biased toward basic residues. Positions 362–374 (NNTSRPSTPTVNV) are enriched in polar residues. Basic and acidic residues predominate over residues 376 to 387 (EAKDTDSDREAG). The 103-residue stretch at 505 to 607 (CRKIQLKKDG…SKNVSCKNCS (103 aa)) folds into the CXC domain. Residues 614-729 (KHLLLAPSDV…TGEELFFDYR (116 aa)) enclose the SET domain.

The protein belongs to the class V-like SAM-binding methyltransferase superfamily. Histone-lysine methyltransferase family. EZ subfamily. In terms of assembly, component of the prc2/eed-ezh2 complex.

The protein resides in the nucleus. The catalysed reaction is L-lysyl(27)-[histone H3] + 3 S-adenosyl-L-methionine = N(6),N(6),N(6)-trimethyl-L-lysyl(27)-[histone H3] + 3 S-adenosyl-L-homocysteine + 3 H(+). In terms of biological role, polycomb group (PcG) protein. Catalytic subunit of the prc2/eed-ezh2 complex, which methylates 'Lys-9' and 'Lys-27' of histone H3, leading to transcriptional repression of the affected target gene. May repress transcription of the egr2 and en2 genes. May regulate the circadian clock via histone methylation at the promoter of the circadian genes. This is Histone-lysine N-methyltransferase EZH2 (ezh2-a) from Xenopus laevis (African clawed frog).